Here is a 209-residue protein sequence, read N- to C-terminus: Thymidylate kinase (209 aa).

Gly-10–Ser-17 lines the ATP pocket.

The protein belongs to the thymidylate kinase family.

The enzyme catalyses dTMP + ATP = dTDP + ADP. Phosphorylation of dTMP to form dTDP in both de novo and salvage pathways of dTTP synthesis. This is Thymidylate kinase from Francisella tularensis subsp. holarctica (strain OSU18).